Here is a 930-residue protein sequence, read N- to C-terminus: MGSDEEDFVFHGTPIEREEEIASRKKKAVAGASGNLRTLPAWKQEVTDEEGRRRFHGAFTGGYSAGYYNTVGSKEGWAPQSFTSSRQNRAGARKQSISDFLDEDEKADMEGKSLSASSQFDTFGFTAAEHSRKHAEKEQHERPSAIPGPVPDELVAPVSESIGVKLLLKMGWRRGHSIKEVRASSDARREARKAFLAFYTDENTKETPDSLVSETEVETSLGEDIKISESTPVYVLNPKQDLHGLGYDPFKHAPEFREKKRSRMSANKEVGFRKPLSMKESLFGPKSGKIAPGFGIGALEELDVEDEDVYAGYDFDQTYVIEDEQPARQSNDNRLRLTSKEHDVLPGFGAAKNSDYSMERFNPPIIPKDFVARHKFSGPLEAETKPTVSAPPEVPPPADNNLKLLIEGFATFVSRCGKLYEDLSREKNQSNQLFDFLREGNGHDYYARRLWEEQQKRKDQSKLTLDVKVSPTVQKMTAETRGSLLGEKPLQRSLKETDTSASSGGSFQFPTNLSDTFTKSASSQEAADAVKPFKDDPAKQERFEQFLKEKYKGGLRTTDSNRVNSMSESARAQERLDFEAAAEAIEKGKAYKEVRRATEQPLDFLAGGLQFTSGGTEQIKDTGVVDMKSSKTYPKREEFQWRPSPLLCKRFDLPDPFMGKLPPAPRARNKMDSLVFLPDTVKAASARQVSESQVPKKETSIEEPEVEVEVENVERPVDLYKAIFSDDSEDDEDQPMNGKIQEGQEKKNEAAATTLNRLIAGDFLESLGKELGFEVPMEEEIKSRSKPEDSSDKRLDRPGLKEKVEEKTSSLTLGSEEEKSRKKREKSPGKRSGGNDLSSSESSGDERRRKRYNKKDRHRNDSESDSSSDYHSRDKQGSRSRSKRRESSREKRSSHKKHSKHRRTKKSSSSRYSSDEEQKESRREKKRRRD.

Lys-25 participates in a covalent cross-link: Glycyl lysine isopeptide (Lys-Gly) (interchain with G-Cter in ubiquitin). The disordered stretch occupies residues 76–152 (GWAPQSFTSS…PSAIPGPVPD (77 aa)). A G-patch domain is found at 159-199 (SESIGVKLLLKMGWRRGHSIKEVRASSDARREARKAFLAFY). An SURP motif repeat occupies 405 to 447 (LIEGFATFVSRCGKLYEDLSREKNQSNQLFDFLREGNGHDYYA). 3 disordered regions span residues 478–508 (AETR…GSFQ), 687–751 (RQVS…NEAA), and 773–930 (FEVP…RRRD). The span at 489 to 498 (PLQRSLKETD) shows a compositional bias: basic and acidic residues. Positions 499–508 (TSASSGGSFQ) are enriched in polar residues. The segment covering 701–711 (IEEPEVEVEVE) has biased composition (acidic residues). The span at 779–808 (EEIKSRSKPEDSSDKRLDRPGLKEKVEEKT) shows a compositional bias: basic and acidic residues. A compositionally biased stretch (basic residues) spans 848 to 857 (RRKRYNKKDR). The span at 858-877 (HRNDSESDSSSDYHSRDKQG) shows a compositional bias: basic and acidic residues. Positions 892-908 (RSSHKKHSKHRRTKKSS) are enriched in basic residues. A compositionally biased stretch (basic and acidic residues) spans 913–923 (SSDEEQKESRR).

Expressed in vasculature of cotyledons and leaves, young meristematic tissues, trichomes and pistils.

The protein localises to the nucleus speckle. The protein resides in the nucleus. It localises to the nucleoplasm. Functionally, functions as a component of microRNA (miRNA) and small interfering RNA (siRNA) biogenesis. May assist DCL1 and DCL4 to efficiently process and/or recruit the precursors of miRNAs and siRNAs. In the miRNA biogenesis pathway, associates with the DCL1 complex that processes primary miRNAs (pri-miRNAs) into miRNAs. Binds pri-miRNAs and precursor miRNAs (pre-miRNAs). Is required for the interaction between pri-miRNAs and DRB1. Required for general proper plant growth and, in particular, initiation of vascular development. Interacts genetically with AMP1, a glutamate carboxypeptidase involved in the regulation of meristem function. The polypeptide is G patch domain-containing protein TGH (Arabidopsis thaliana (Mouse-ear cress)).